Here is a 385-residue protein sequence, read N- to C-terminus: Queuine tRNA-ribosyltransferase (385 aa).

The active-site Proton acceptor is the aspartate 92. Substrate-binding positions include 92-96 (DSGGF), aspartate 146, glutamine 188, and glycine 215. The RNA binding stretch occupies residues 246–252 (GVGHPED). Aspartate 265 acts as the Nucleophile in catalysis. Residues 270-274 (TRTGR) form an RNA binding; important for wobble base 34 recognition region. Residues cysteine 303, cysteine 305, cysteine 308, and histidine 334 each coordinate Zn(2+).

It belongs to the queuine tRNA-ribosyltransferase family. Homodimer. Within each dimer, one monomer is responsible for RNA recognition and catalysis, while the other monomer binds to the replacement base PreQ1. It depends on Zn(2+) as a cofactor.

It carries out the reaction 7-aminomethyl-7-carbaguanine + guanosine(34) in tRNA = 7-aminomethyl-7-carbaguanosine(34) in tRNA + guanine. The protein operates within tRNA modification; tRNA-queuosine biosynthesis. In terms of biological role, catalyzes the base-exchange of a guanine (G) residue with the queuine precursor 7-aminomethyl-7-deazaguanine (PreQ1) at position 34 (anticodon wobble position) in tRNAs with GU(N) anticodons (tRNA-Asp, -Asn, -His and -Tyr). Catalysis occurs through a double-displacement mechanism. The nucleophile active site attacks the C1' of nucleotide 34 to detach the guanine base from the RNA, forming a covalent enzyme-RNA intermediate. The proton acceptor active site deprotonates the incoming PreQ1, allowing a nucleophilic attack on the C1' of the ribose to form the product. After dissociation, two additional enzymatic reactions on the tRNA convert PreQ1 to queuine (Q), resulting in the hypermodified nucleoside queuosine (7-(((4,5-cis-dihydroxy-2-cyclopenten-1-yl)amino)methyl)-7-deazaguanosine). The polypeptide is Queuine tRNA-ribosyltransferase (Thermus thermophilus (strain ATCC BAA-163 / DSM 7039 / HB27)).